Reading from the N-terminus, the 115-residue chain is Phosphoribosyl-AMP cyclohydrolase (115 aa).

Aspartate 80 provides a ligand contact to Mg(2+). Cysteine 81 contacts Zn(2+). Residues aspartate 82 and aspartate 84 each coordinate Mg(2+). Residues cysteine 97 and cysteine 104 each coordinate Zn(2+).

The protein belongs to the PRA-CH family. Homodimer. The cofactor is Mg(2+). It depends on Zn(2+) as a cofactor.

It is found in the cytoplasm. It carries out the reaction 1-(5-phospho-beta-D-ribosyl)-5'-AMP + H2O = 1-(5-phospho-beta-D-ribosyl)-5-[(5-phospho-beta-D-ribosylamino)methylideneamino]imidazole-4-carboxamide. The protein operates within amino-acid biosynthesis; L-histidine biosynthesis; L-histidine from 5-phospho-alpha-D-ribose 1-diphosphate: step 3/9. Functionally, catalyzes the hydrolysis of the adenine ring of phosphoribosyl-AMP. This chain is Phosphoribosyl-AMP cyclohydrolase, found in Mycobacterium avium (strain 104).